The sequence spans 1378 residues: S-cell enriched with leucine-rich repeat-containing protein slrA (1378 aa).

The helical transmembrane segment at 17–37 (IFKILYCYLFTSLLLILSTWV) threads the bilayer. Residues Asn-59, Asn-112, Asn-143, Asn-172, and Asn-201 are each glycosylated (N-linked (GlcNAc...) asparagine). LRR repeat units lie at residues 143–165 (NLTG…LPYL), 167–188 (HLRN…GLLK), 191–212 (SLVA…ADSK), 213–235 (AISY…WKTP), 236–257 (NLLF…EFFR), 260–281 (SLDY…LSKS), 282–304 (RISY…TCWK), 307–329 (SLRI…IFDH), and 331–353 (PLQY…LDCA). N-linked (GlcNAc...) asparagine glycosylation is found at Asn-265, Asn-287, and Asn-296. N-linked (GlcNAc...) asparagine glycans are attached at residues Asn-416, Asn-436, Asn-451, Asn-491, Asn-513, Asn-596, Asn-605, Asn-634, Asn-704, Asn-710, Asn-740, Asn-741, Asn-771, Asn-788, Asn-801, Asn-826, Asn-843, Asn-861, Asn-875, and Asn-907. Positions 886–946 (SLNNNNNNNN…NNNENNNENK (61 aa)) form a coiled coil. A compositionally biased stretch (low complexity) spans 891-909 (NNNNNNNNNKNNNNNNNDS). A disordered region spans residues 891 to 945 (NNNNNNNNNKNNNNNNNDSNNEKEVVEDEEEDLDYSSQNDNNNINNNNNENNNEN). The segment covering 915–924 (VVEDEEEDLD) has biased composition (acidic residues). A compositionally biased stretch (low complexity) spans 929–945 (NDNNNINNNNNENNNEN). Asn-953, Asn-970, Asn-1090, and Asn-1100 each carry an N-linked (GlcNAc...) asparagine glycan. The helical transmembrane segment at 1160 to 1180 (YYIVFFGCASGLILVLVICIV) threads the bilayer. Residues 1227–1276 (DLNNNNNNNNNNNNNNNNNNNNNNNNNNNNNNNNNFNDGSDTFNNNNKKN) show a composition bias toward low complexity. The interval 1227–1378 (DLNNNNNNNN…KKHLTIINKK (152 aa)) is disordered. The span at 1289 to 1304 (DGKENDIKNINNKKDE) shows a compositional bias: basic and acidic residues. The span at 1305-1324 (KEDDGDDDDDEDDDEYEDDT) shows a compositional bias: acidic residues. Low complexity predominate over residues 1328–1353 (SSGNSSRSKGSDGGSSSNSLSSDKQS). Asn-1331 and Asn-1360 each carry an N-linked (GlcNAc...) asparagine glycan. Polar residues predominate over residues 1354–1364 (FNNGNENNSII). Positions 1368–1378 (KKKHLTIINKK) are enriched in basic residues.

Its subcellular location is the membrane. This Dictyostelium discoideum (Social amoeba) protein is S-cell enriched with leucine-rich repeat-containing protein slrA (slrA).